The following is a 244-amino-acid chain: Ureidoacrylate amidohydrolase RutB (244 aa).

The Proton acceptor role is filled by aspartate 38. Lysine 147 is a catalytic residue. Cysteine 180 functions as the Nucleophile in the catalytic mechanism.

This sequence belongs to the isochorismatase family. RutB subfamily.

It carries out the reaction (Z)-3-ureidoacrylate + H2O + H(+) = (Z)-3-aminoacrylate + NH4(+) + CO2. The catalysed reaction is (Z)-3-ureidoacrylate + H2O = (Z)-3-aminoacrylate + carbamate + H(+). The enzyme catalyses (Z)-2-methylureidoacrylate + H2O + H(+) = (Z)-2-methylaminoacrylate + NH4(+) + CO2. Its function is as follows. Hydrolyzes ureidoacrylate to form aminoacrylate and carbamate. The carbamate hydrolyzes spontaneously, thereby releasing one of the nitrogen atoms of the pyrimidine ring as ammonia and one of its carbon atoms as CO2. This is Ureidoacrylate amidohydrolase RutB from Escherichia coli O55:H7 (strain CB9615 / EPEC).